We begin with the raw amino-acid sequence, 424 residues long: MQLLNLGLLLLLPFVAGEIAPQPEPLRAGPSDIVPGQYIVTLKEGLASAQIREHKKWVSSVHQANLDSFAAGASGVETVGIMKNFHIHNLNMYSGGFDDKTAEDLRRSPDVKSVHPDQHVYLAKTVTQPQARWGLGYMSSKGMPVPLHSTLVDYLYDDKAGEGVWAYVLDTGINVDHIEFEDRGILGHNAIPNKPHTDEFEHGTYVAGIIAGKTYGVAKKANVVSAKAFDTGSSTYNYILETYDWIVKNITDSNRKNKAVINLSISGAKYQPFDDAVENAFKAGITAVVAAGNDGKDAKNNTPASSPNAITVGAVRWENTRPSLASNYGKIVDIWAPGELIKSCWKGGNNATSTQSGTSAASPHVAGLVAYLMSLENLPSPSAVTARVLNLTIPNLVKDAKDSPNRVVYNGIQERKFTLPKNTK.

The signal sequence occupies residues 1–17; that stretch reads MQLLNLGLLLLLPFVAG. Positions 18 to 123 are excised as a propeptide; the sequence is EIAPQPEPLR…VHPDQHVYLA (106 aa). Residues 37 to 123 form the Inhibitor I9 domain; it reads QYIVTLKEGL…VHPDQHVYLA (87 aa). In terms of domain architecture, Peptidase S8 spans 132–424; the sequence is RWGLGYMSSK…RKFTLPKNTK (293 aa). Active-site charge relay system residues include D170 and H202. Residues N249, N262, and N350 are each glycosylated (N-linked (GlcNAc...) asparagine). The active-site Charge relay system is the S359. A glycan (N-linked (GlcNAc...) asparagine) is linked at N390.

It belongs to the peptidase S8 family.

It localises to the secreted. In terms of biological role, secreted subtilisin-like serine protease with keratinolytic activity that contributes to pathogenicity. This chain is Subtilisin-like protease 2 (SUB2), found in Arthroderma otae (Microsporum canis).